We begin with the raw amino-acid sequence, 394 residues long: F-box/kelch-repeat protein At1g23390 (394 aa).

The 48-residue stretch at 15-62 (EEESSIDGDILESILSYLPLLDLDSACQVSKSWNRAVFYSLRRLKTMP) folds into the F-box domain. Kelch repeat units follow at residues 65–111 (FVYN…RSSH), 155–204 (SLII…TWLS), 206–252 (AVSS…SIGF), and 321–369 (MVYV…VIVA).

The chain is F-box/kelch-repeat protein At1g23390 from Arabidopsis thaliana (Mouse-ear cress).